Reading from the N-terminus, the 182-residue chain is Adenylate kinase (182 aa).

12-17 is a binding site for ATP; that stretch reads GAGKGT. An NMP region spans residues 32-61; that stretch reads STGDLLRAEVKAGSELGKEAEAVMNRGELV. AMP-binding positions include threonine 33, arginine 38, 59–61, 85–88, and glutamine 92; these read ELV and GFPR. Positions 126–132 are LID; that stretch reads ARGRADD. Arginine 127 provides a ligand contact to ATP. Positions 129 and 140 each coordinate AMP. Glycine 168 contacts ATP.

The protein belongs to the adenylate kinase family. Monomer.

The protein localises to the cytoplasm. It catalyses the reaction AMP + ATP = 2 ADP. It participates in purine metabolism; AMP biosynthesis via salvage pathway; AMP from ADP: step 1/1. In terms of biological role, catalyzes the reversible transfer of the terminal phosphate group between ATP and AMP. Plays an important role in cellular energy homeostasis and in adenine nucleotide metabolism. This is Adenylate kinase from Synechococcus sp. (strain RCC307).